A 138-amino-acid chain; its full sequence is Transcription antitermination protein NusB (138 aa).

Belongs to the NusB family.

Its function is as follows. Involved in transcription antitermination. Required for transcription of ribosomal RNA (rRNA) genes. Binds specifically to the boxA antiterminator sequence of the ribosomal RNA (rrn) operons. The sequence is that of Transcription antitermination protein NusB from Leptospira borgpetersenii serovar Hardjo-bovis (strain JB197).